The chain runs to 281 residues: MENPSSNLEKLQQDCYNEWMSLQAKRITELKEAISTGEKDDNKLLDLIRTAIRDFGDYARKRSEHSRRFSSNYFAPTWNTCLENALLWMGGCRPSSFIRLVYAMCGSQTEHRLTNFFNNTNHDIDSNLSMALGETRGGIGGGESMSDLTAEQLFKINELHLKTVEAENKLTKVSASLQEDTADTPIAVAAFYKEVIGQADVVVERALDKHEEDMGGLLVEADKLRMTTLTKIVDILTAVQAADFLLAGKKLHLAMHEWGKSREHRRLEASGGDSGGNVTRE.

The DOG1 domain maps to 9 to 265; the sequence is EKLQQDCYNE…HEWGKSREHR (257 aa). The disordered stretch occupies residues 262–281; that stretch reads REHRRLEASGGDSGGNVTRE.

The sequence is that of Protein DOG1-like 1 from Arabidopsis thaliana (Mouse-ear cress).